We begin with the raw amino-acid sequence, 262 residues long: Small ribosomal subunit protein eS1 (262 aa).

Belongs to the eukaryotic ribosomal protein eS1 family. In terms of assembly, component of the small ribosomal subunit. Mature ribosomes consist of a small (40S) and a large (60S) subunit. The 40S subunit contains about 33 different proteins and 1 molecule of RNA (18S). The 60S subunit contains about 49 different proteins and 3 molecules of RNA (25S, 5.8S and 5S).

Its subcellular location is the cytoplasm. This is Small ribosomal subunit protein eS1 from Theileria annulata.